Reading from the N-terminus, the 140-residue chain is Sex-regulated protein janus-B (140 aa).

R42 provides a ligand contact to substrate. The Proton acceptor role is filled by H69. 110–112 (SRT) contacts substrate.

Belongs to the janus family. As to expression, germline cells of adult males.

Its function is as follows. JanA and janB regulate somatic sex differentiation. The sequence is that of Sex-regulated protein janus-B (janB) from Drosophila melanogaster (Fruit fly).